The sequence spans 241 residues: UDP-2,3-diacylglucosamine hydrolase (241 aa).

Residues D8, H10, D41, N79, and H114 each contribute to the Mn(2+) site. Position 79 to 80 (79 to 80 (NR)) interacts with substrate. Residues D122, S160, K167, and H195 each coordinate substrate. The Mn(2+) site is built by H195 and H197.

It belongs to the LpxH family. The cofactor is Mn(2+).

Its subcellular location is the cell inner membrane. It carries out the reaction UDP-2-N,3-O-bis[(3R)-3-hydroxytetradecanoyl]-alpha-D-glucosamine + H2O = 2-N,3-O-bis[(3R)-3-hydroxytetradecanoyl]-alpha-D-glucosaminyl 1-phosphate + UMP + 2 H(+). It participates in glycolipid biosynthesis; lipid IV(A) biosynthesis; lipid IV(A) from (3R)-3-hydroxytetradecanoyl-[acyl-carrier-protein] and UDP-N-acetyl-alpha-D-glucosamine: step 4/6. Its function is as follows. Hydrolyzes the pyrophosphate bond of UDP-2,3-diacylglucosamine to yield 2,3-diacylglucosamine 1-phosphate (lipid X) and UMP by catalyzing the attack of water at the alpha-P atom. Involved in the biosynthesis of lipid A, a phosphorylated glycolipid that anchors the lipopolysaccharide to the outer membrane of the cell. The sequence is that of UDP-2,3-diacylglucosamine hydrolase from Azotobacter vinelandii (strain DJ / ATCC BAA-1303).